We begin with the raw amino-acid sequence, 414 residues long: MKAEILAVGTELLLGNIVNTNAQYISKRLADLGIEVYNQSVVGDNAERLREAYELAFKRADLVITTGGLGPTKDDLTKEVAFEYLGKEAKLHEESLRRIEDYFKKIDRPMVDSNKKQACFPEDAIIMPNNNGTAPGCIIEENKKILAVLPGPPREMKAMFEESLVPYLRKFQENVLHSKTLRILGVGESRVAEIVDDILENSTNPTVAPYAKDSEVTLRITAKAKTIEDAEKLIEPVEQEIRDRLGLSVYADGEVTLEEVLGKMLIDNNITIATAESCTGGLLAGRLVNYPGISSVFKEGMITYSNEAKMKRIKVKKDTLQKYGAVSSQTAAEMAEGVAKVTGSDIGISTTGIAGPDGGTKEKPVGLVYVGICIKGDVKTKELHLVGDRQRVRQHTVIRALEWLRRELIRKGIK.

It belongs to the CinA family.

The sequence is that of Putative competence-damage inducible protein from Clostridium novyi (strain NT).